The sequence spans 85 residues: UPF0291 protein SSA_1878 (85 aa).

A disordered region spans residues G58 to S85. Over residues T62–S85 the composition is skewed to basic and acidic residues.

This sequence belongs to the UPF0291 family.

Its subcellular location is the cytoplasm. This Streptococcus sanguinis (strain SK36) protein is UPF0291 protein SSA_1878.